Here is a 131-residue protein sequence, read N- to C-terminus: Profilin-1 (131 aa).

Cys13 and Cys115 are joined by a disulfide. An Involved in PIP2 interaction motif is present at residues Ala81–Thr97. The residue at position 111 (Thr111) is a Phosphothreonine.

Belongs to the profilin family. As to quaternary structure, multimer. Occurs in many kinds of cells as a complex with monomeric actin in a 1:1 ratio. In terms of processing, phosphorylated by MAP kinases. As to expression, pollen specific.

It is found in the cytoplasm. It localises to the cytoskeleton. Its function is as follows. Binds to actin and affects the structure of the cytoskeleton. At high concentrations, profilin prevents the polymerization of actin, whereas it enhances it at low concentrations. By binding to PIP2, it inhibits the formation of IP3 and DG. The chain is Profilin-1 (PRO1) from Zea mays (Maize).